The primary structure comprises 152 residues: Large ribosomal subunit protein uL15 (152 aa).

A disordered region spans residues 1–57 (MTSTLNTLKSNSGSRKKKLRKGRGIAAGQGASCGFGMRGQKSRSGRPTRPGFEGGQM). Basic residues predominate over residues 14-23 (SRKKKLRKGR). Positions 25–37 (IAAGQGASCGFGM) are enriched in gly residues.

This sequence belongs to the universal ribosomal protein uL15 family. In terms of assembly, part of the 50S ribosomal subunit.

In terms of biological role, binds to the 23S rRNA. This chain is Large ribosomal subunit protein uL15, found in Prochlorococcus marinus (strain AS9601).